Consider the following 355-residue polypeptide: Syntaxin-5 (355 aa).

Topologically, residues 1 to 333 (MIPRKRYGSK…KYFQSVTSNR (333 aa)) are cytoplasmic. An IxM motif; signal for cargo packaging into COPII-coated vesicles motif is present at residues 245–247 (IDM). The t-SNARE coiled-coil homology domain occupies 263-325 (DSYIQSRADT…EAAHSEILKY (63 aa)). Positions 287 to 318 (FQQLAHMVKEQEETIQRIDENVLGAQLDVEAA) form a coiled coil. The helical; Anchor for type IV membrane protein transmembrane segment at 334–354 (WLMVKIFLILIVFFIIFVVFL) threads the bilayer. Position 355 (alanine 355) is a topological domain, vesicular.

It belongs to the syntaxin family. In terms of assembly, part of a ternary complex containing STX5A, NSFL1C and VCP. Part of a unique SNARE complex composed of the Golgi SNAREs GOSR1, GOSR2, YKT6 and VTI1A. Component of a SNARE complex consisting of STX5, YKT6, GOSR1 and BET1L. Interacts with BET1L. Interacts with BET1. Interacts with COG4. Interacts with GM130/GOLGA2. Interacts (via IxM motif) with SEC24C and SEC24D; mediates STX5 packaging into COPII-coated vesicles. Interacts with VLDLR; this interaction mediates VLDLR translocation from the endoplasmic reticulum to the plasma membrane.

The protein resides in the endoplasmic reticulum-Golgi intermediate compartment membrane. It localises to the golgi apparatus membrane. Mediates endoplasmic reticulum to Golgi transport. Together with p115/USO1 and GM130/GOLGA2, involved in vesicle tethering and fusion at the cis-Golgi membrane to maintain the stacked and inter-connected structure of the Golgi apparatus. Functionally, required for Golgi to endoplasmic reticulum retrogade transport, and for intra-Golgi transport. The sequence is that of Syntaxin-5 (Stx5) from Mus musculus (Mouse).